The following is a 606-amino-acid chain: Phosphoenolpyruvate carboxykinase [GTP] (606 aa).

Residues arginine 79 and 218–220 (YGG) each bind substrate. The Mn(2+) site is built by lysine 227 and histidine 247. Serine 269 serves as a coordination point for substrate. 270-275 (ACGKTN) serves as a coordination point for GTP. Cysteine 271 is an active-site residue. Residue aspartate 294 coordinates Mn(2+). Position 384-386 (384-386 (NSR)) interacts with substrate. GTP-binding positions include arginine 386, arginine 417, and 512–515 (FGEN).

It belongs to the phosphoenolpyruvate carboxykinase [GTP] family. Monomer. Requires Mn(2+) as cofactor.

It localises to the cytoplasm. It carries out the reaction oxaloacetate + GTP = phosphoenolpyruvate + GDP + CO2. Its pathway is carbohydrate biosynthesis; gluconeogenesis. Functionally, catalyzes the conversion of oxaloacetate (OAA) to phosphoenolpyruvate (PEP), the rate-limiting step in the metabolic pathway that produces glucose from lactate and other precursors derived from the citric acid cycle. The protein is Phosphoenolpyruvate carboxykinase [GTP] of Corynebacterium jeikeium (strain K411).